The sequence spans 141 residues: Putative phosphatidylglycerol/phosphatidylinositol transfer protein DDB_G0278295 (141 aa).

Positions 1–19 (MRLLLALFFVLALVSPSFT) are cleaved as a signal peptide. Asparagine 82 and asparagine 104 each carry an N-linked (GlcNAc...) asparagine glycan.

The protein belongs to the NPC2 family. As to quaternary structure, monomer.

In terms of biological role, catalyzes the intermembrane transfer of phosphatidylglycerol and phosphatidylinositol. The chain is Putative phosphatidylglycerol/phosphatidylinositol transfer protein DDB_G0278295 from Dictyostelium discoideum (Social amoeba).